We begin with the raw amino-acid sequence, 397 residues long: Elongation factor Tu (397 aa).

The region spanning 10–206 (KPHCNIGTIG…AVDTWIPDPQ (197 aa)) is the tr-type G domain. A G1 region spans residues 19 to 26 (GHVDHGKT). 19–26 (GHVDHGKT) serves as a coordination point for GTP. T26 is a Mg(2+) binding site. The interval 61-65 (GITIS) is G2. The G3 stretch occupies residues 82-85 (DCPG). GTP-binding positions include 82 to 86 (DCPGH) and 137 to 140 (NKCD). Positions 137–140 (NKCD) are G4. A G5 region spans residues 175-177 (SAL).

Belongs to the TRAFAC class translation factor GTPase superfamily. Classic translation factor GTPase family. EF-Tu/EF-1A subfamily. In terms of assembly, monomer.

It is found in the cytoplasm. It catalyses the reaction GTP + H2O = GDP + phosphate + H(+). Its function is as follows. GTP hydrolase that promotes the GTP-dependent binding of aminoacyl-tRNA to the A-site of ribosomes during protein biosynthesis. In Lachnoclostridium phytofermentans (strain ATCC 700394 / DSM 18823 / ISDg) (Clostridium phytofermentans), this protein is Elongation factor Tu.